Here is a 474-residue protein sequence, read N- to C-terminus: Glutamate--tRNA ligase (474 aa).

Residues 11–21 (PSPTGFLHIGG) carry the 'HIGH' region motif. Residues 240-244 (KLSKR) carry the 'KMSKS' region motif. Lys243 lines the ATP pocket.

It belongs to the class-I aminoacyl-tRNA synthetase family. Glutamate--tRNA ligase type 1 subfamily. As to quaternary structure, monomer.

The protein localises to the cytoplasm. It catalyses the reaction tRNA(Glu) + L-glutamate + ATP = L-glutamyl-tRNA(Glu) + AMP + diphosphate. Functionally, catalyzes the attachment of glutamate to tRNA(Glu) in a two-step reaction: glutamate is first activated by ATP to form Glu-AMP and then transferred to the acceptor end of tRNA(Glu). The protein is Glutamate--tRNA ligase of Nitrobacter hamburgensis (strain DSM 10229 / NCIMB 13809 / X14).